The primary structure comprises 189 residues: Putative manganese efflux pump MntP (189 aa).

Helical transmembrane passes span 3–23 (LSATLVLAFAMSMDAFAASIG), 41–61 (LIFGVIEAITPLIGWCIGLFA), 65–85 (ILEWDHWIAFSLLFILGCRMI), 104–124 (FWVLVMTAIATSLDAMAIGVG), 132–152 (IVHTAMAIGLATMIMATLGML), and 165–185 (AEIIGGIVLIGIGFNILYEHI).

The protein belongs to the MntP (TC 9.B.29) family.

It localises to the cell inner membrane. Its function is as follows. Probably functions as a manganese efflux pump. The protein is Putative manganese efflux pump MntP of Yersinia enterocolitica serotype O:8 / biotype 1B (strain NCTC 13174 / 8081).